The following is a 997-amino-acid chain: MEKQKPFTLFVPPRLSSSQVSAVKPQTAGGDSNYFKTVNKCTEGDFGVPLTMSSLSKNRENIDTDPAFQKLSILPMLEQVANSGSCHYQEGVNDSDFENSEPMSRLYSKLYKEAEKIKKWKVSIESELKQKENKLQENRKIIEAQRKAIQELQFENEKVSLKLEEEIQENKDLIKENNATRHWCNLLKETCARSAEKTSKYEYEREETRQVYVDLNNNIEKMILAFEELRVQAENARLEMHFKLKEDHEKIQHLEEEYQKEVNNKENQVSLLLIQSTEKENKMKDLTFLLEESRDKANQLEEKTKLQDENLKELNEKKDHLTSELEDIKMSMQRSMSTQKTLEEDLQIATKTIYQLTEEKEAQMEELNKAKTTHSLVVTELKATTCTLEELLRTEQQRLENNEDQLKLITMELQKKSSELEEMTKFKNNKEVELEELKTILAEDQKLLDEKKQVEKLAEELQGKEQELTFLLQTREKEIHDLEVQVTVTKTSEEHYLKQVEEMKTELEKEKLKNIELTANSDMLLLENKKLVQEASDMVLELKKHQEDIINCKKQEERMLKQIETLEEKEMNLRDELESVRKEFIQQGDEVKCKLDKSEENARSIEYEVLKKEKQMKILENKCNNLKKQIENKSKNIEELHQENKALKKKSSAENKQLNAYEIKVNKLELELASTKQKFEEMINNYQKEIEIKKISEEKLLGEVEKAKATVDEAVKLQKEIDLRCQHKIAEMVALMEKHKHQYDKIVEERDSELGLYKNREQEQSSAKVALETELSNIRNELVSLKKQLEVEKEEKEKLKMEQENTAILTDKKDKKIQASLLESPEATSWKFDSKTTPSQNISRLSSSMDSGKSKDNRDSLRASAKSILSTTVTKEYTVKTPTKKSIYQRENKYLPTGGSNKKRKTVFEFDVNSDSSETTDLLSLVSEEDISNRIYNNNTPDSHLLVKTPKQTPLSLSTPASFTKFGSLKKMREDRWATIAKIDRKRRLKEAEKLFT.

The Mediates head to head self-assembly of N-terminal ends signature appears at 102 to 112; it reads PMSRLYSKLYK. A Nuclear localization signal motif is present at residues 118–121; sequence KKWK. Coiled coils occupy residues 121 to 176 and 212 to 696; these read KVSI…LIKE and YVDL…KKIS. The interval 207–363 is interaction with SYCE3; sequence ETRQVYVDLN…YQLTEEKEAQ (157 aa). A required for pH-induced assembly of C-terminal ends into antiparallel tetramers region spans residues 698-792; it reads EKLLGEVEKA…VSLKKQLEVE (95 aa). The short motif at 701-704 is the Nuclear localization signal element; that stretch reads LGEV. Residues 768-806 are a coiled coil; the sequence is KVALETELSNIRNELVSLKKQLEVEKEEKEKLKMEQENT. A DNA-binding region spans residues 805-997; the sequence is NTAILTDKKD…RLKEAEKLFT (193 aa). Residue serine 824 is modified to Phosphoserine. The interval 828–863 is disordered; that stretch reads TSWKFDSKTTPSQNISRLSSSMDSGKSKDNRDSLRA. Residues 835–851 are compositionally biased toward polar residues; the sequence is KTTPSQNISRLSSSMDS. A compositionally biased stretch (basic and acidic residues) spans 852-861; it reads GKSKDNRDSL. Residues 902 to 905 carry the Nuclear localization signal motif; it reads KKRK. Threonine 940 is modified (phosphothreonine).

As to quaternary structure, structural component of synaptonemal complexes. Homotetramer that consists of an N-terminal four-helical bundle that bifurcates into two elongated C-terminal dimeric coiled coils. This tetrameric building block potentially self-assembles into a supramolecular zipper-like lattice to mediate meiotic chromosome synapsis. Self-assembly is likely initiated by local proton density at chromosome axis, which is predicted to trigger antiparallel back to back assembly of adjacent C-terminal ends into tetrameric structures that anchor to chromosomal DNA. Then the N-terminal ends are predicted to undergo cooperative antiparallel head to head assembly at the midline of synaptonemal complexes central element to form a zipper-like lattice between properly aligned homologous chromosomes. The nascent synapsis generated by SYCP1 is stabilized through interaction with central element proteins SYCE1 and SYCE2. Interacts (via tetrameric core) with SYCE3; the interaction remodels SYCP1 homotetramers to 2:1 heterotrimers with SYCE3. SYCP1/SYCE3 heterotrimers form lattice assemblies as part of the mature synaptonemal complex via both lateral and head-to-head interactions. Forms a complex with EWSR1, PRDM9, SYCP3 and REC8; complex formation is dependent of phosphorylated form of REC8 and requires PRDM9 bound to hotspot DNA; EWSR1 joins PRDM9 with the chromosomal axis through REC8. Interacts with SPO16. As to expression, testis.

It is found in the nucleus. The protein localises to the chromosome. The protein resides in the centromere. Its function is as follows. Major component of the transverse filaments of synaptonemal complexes, formed between homologous chromosomes during meiotic prophase. Required for normal assembly of the central element of the synaptonemal complexes. Required for normal centromere pairing during meiosis. Required for normal meiotic chromosome synapsis during oocyte and spermatocyte development and for normal male and female fertility. This is Synaptonemal complex protein 1 from Rattus norvegicus (Rat).